We begin with the raw amino-acid sequence, 150 residues long: Small ribosomal subunit protein eS19 (150 aa).

The protein belongs to the eukaryotic ribosomal protein eS19 family. In terms of assembly, part of the 30S ribosomal subunit.

Its function is as follows. May be involved in maturation of the 30S ribosomal subunit. The polypeptide is Small ribosomal subunit protein eS19 (Thermoplasma volcanium (strain ATCC 51530 / DSM 4299 / JCM 9571 / NBRC 15438 / GSS1)).